We begin with the raw amino-acid sequence, 114 residues long: Large ribosomal subunit protein bL19 (114 aa).

Belongs to the bacterial ribosomal protein bL19 family.

This protein is located at the 30S-50S ribosomal subunit interface and may play a role in the structure and function of the aminoacyl-tRNA binding site. The sequence is that of Large ribosomal subunit protein bL19 (rplS) from Listeria monocytogenes serovar 1/2a (strain ATCC BAA-679 / EGD-e).